The following is a 429-amino-acid chain: Enolase (429 aa).

A (2R)-2-phosphoglycerate-binding site is contributed by Q162. E204 serves as the catalytic Proton donor. Mg(2+)-binding residues include D241, E282, and D309. The (2R)-2-phosphoglycerate site is built by K334, R363, S364, and K385. K334 (proton acceptor) is an active-site residue.

Belongs to the enolase family. The cofactor is Mg(2+).

The protein resides in the cytoplasm. Its subcellular location is the secreted. The protein localises to the cell surface. The catalysed reaction is (2R)-2-phosphoglycerate = phosphoenolpyruvate + H2O. It functions in the pathway carbohydrate degradation; glycolysis; pyruvate from D-glyceraldehyde 3-phosphate: step 4/5. Its function is as follows. Catalyzes the reversible conversion of 2-phosphoglycerate (2-PG) into phosphoenolpyruvate (PEP). It is essential for the degradation of carbohydrates via glycolysis. This chain is Enolase, found in Acidothermus cellulolyticus (strain ATCC 43068 / DSM 8971 / 11B).